Here is a 158-residue protein sequence, read N- to C-terminus: Serine-protein kinase RsbW (158 aa).

The protein belongs to the anti-sigma-factor family.

It catalyses the reaction L-seryl-[protein] + ATP = O-phospho-L-seryl-[protein] + ADP + H(+). The catalysed reaction is L-threonyl-[protein] + ATP = O-phospho-L-threonyl-[protein] + ADP + H(+). In terms of biological role, negative regulator of sigma-B activity. Phosphorylates and inactivates its specific antagonist protein, RsbV. Upon phosphorylation of RsbV, RsbW is released and binds to sigma-B, thereby blocking its ability to form an RNA polymerase holoenzyme (E-sigma-B). The protein is Serine-protein kinase RsbW of Oceanobacillus iheyensis (strain DSM 14371 / CIP 107618 / JCM 11309 / KCTC 3954 / HTE831).